The following is a 453-amino-acid chain: Ribulose bisphosphate carboxylase large chain (453 aa).

The propeptide occupies 1–2 (MS). N-acetylproline is present on Pro3. Lys14 is subject to N6,N6,N6-trimethyllysine. The substrate site is built by Asn123 and Thr173. Catalysis depends on Lys175, which acts as the Proton acceptor. Lys177 lines the substrate pocket. Mg(2+)-binding residues include Lys201, Asp203, and Glu204. Lys201 is subject to N6-carboxylysine. His294 serves as the catalytic Proton acceptor. Positions 295, 327, and 379 each coordinate substrate.

Belongs to the RuBisCO large chain family. Type I subfamily. Heterohexadecamer of 8 large chains and 8 small chains; disulfide-linked. The disulfide link is formed within the large subunit homodimers. Requires Mg(2+) as cofactor. In terms of processing, the disulfide bond which can form in the large chain dimeric partners within the hexadecamer appears to be associated with oxidative stress and protein turnover.

The protein resides in the plastid. The protein localises to the chloroplast. It carries out the reaction 2 (2R)-3-phosphoglycerate + 2 H(+) = D-ribulose 1,5-bisphosphate + CO2 + H2O. It catalyses the reaction D-ribulose 1,5-bisphosphate + O2 = 2-phosphoglycolate + (2R)-3-phosphoglycerate + 2 H(+). Functionally, ruBisCO catalyzes two reactions: the carboxylation of D-ribulose 1,5-bisphosphate, the primary event in carbon dioxide fixation, as well as the oxidative fragmentation of the pentose substrate in the photorespiration process. Both reactions occur simultaneously and in competition at the same active site. This is Ribulose bisphosphate carboxylase large chain from Phuopsis stylosa (Caucasian crosswort).